A 365-amino-acid polypeptide reads, in one-letter code: Patr class I histocompatibility antigen, A-108 alpha chain (365 aa).

An N-terminal signal peptide occupies residues 1–24 (MAVMPPRTLLLLLSGALALTQTWA). The alpha-1 stretch occupies residues 25–114 (GSHSMRYFYT…LRGYYNQSED (90 aa)). Topologically, residues 25-308 (GSHSMRYFYT…EPSSQPTIPI (284 aa)) are extracellular. Asn110 carries N-linked (GlcNAc...) asparagine glycosylation. The alpha-2 stretch occupies residues 115-206 (GSHTIQIMYG…ENGKETLQRT (92 aa)). Disulfide bonds link Cys125–Cys188 and Cys227–Cys283. The segment at 207 to 298 (DPPKTHMTHH…GLPKPLTLRW (92 aa)) is alpha-3. Positions 209 to 295 (PKTHMTHHPI…QHEGLPKPLT (87 aa)) constitute an Ig-like C1-type domain. Residues 299-308 (EPSSQPTIPI) are connecting peptide. The chain crosses the membrane as a helical span at residues 309–332 (VGIIAGLVLLGAVITGAVVAAVMW). Over 333 to 365 (RRKSSDRKGGSYTQAASSDSAQGSDVSLTACKV) the chain is Cytoplasmic. The segment at 339–360 (RKGGSYTQAASSDSAQGSDVSL) is disordered. Residue Ser343 is modified to Phosphoserine. Phosphotyrosine is present on Tyr344. Low complexity predominate over residues 346–359 (QAASSDSAQGSDVS). Phosphoserine is present on residues Ser349, Ser350, Ser352, Ser356, and Ser359.

This sequence belongs to the MHC class I family. As to quaternary structure, heterodimer of an alpha chain and a beta chain (beta-2-microglobulin).

Its subcellular location is the membrane. Its function is as follows. Involved in the presentation of foreign antigens to the immune system. The polypeptide is Patr class I histocompatibility antigen, A-108 alpha chain (Patr-A) (Pan troglodytes (Chimpanzee)).